The primary structure comprises 158 residues: MTQIPMTLRGAEKLREELQHLKSVLRPQIIAAIAEAREHGDLKENAEYHAAREQQGFCEGRIQEIESKLSHAQIIDVTKIANKGIVIFGATVTVLNTHSEEKKIYQIVGDDEANFKKDLISVNSPIARGLIAKKISDVAVIHTPGGEVEYEILDVKYC.

This sequence belongs to the GreA/GreB family.

In terms of biological role, necessary for efficient RNA polymerase transcription elongation past template-encoded arresting sites. The arresting sites in DNA have the property of trapping a certain fraction of elongating RNA polymerases that pass through, resulting in locked ternary complexes. Cleavage of the nascent transcript by cleavage factors such as GreA or GreB allows the resumption of elongation from the new 3'terminus. GreA releases sequences of 2 to 3 nucleotides. The sequence is that of Transcription elongation factor GreA from Hamiltonella defensa subsp. Acyrthosiphon pisum (strain 5AT).